A 177-amino-acid chain; its full sequence is MFFAEIKQEEVIVGGFRIGQGFDVHQLVEGRKLVIGGVTIPYEKGLLGHSDADVLLHAICDAVLGAAALGDIGRHFSDTDPRYRNIDSRVLLQNVGNLLAERGYRVVNVDATIIAQAPRMASHIPAMVANIAQDLRMQPGDVNVKAKTAERLGPVGRGEGIEAEAVCLITHMNQTTD.

Positions 23 and 25 each coordinate a divalent metal cation. 4-CDP-2-C-methyl-D-erythritol 2-phosphate contacts are provided by residues 23–25 (DVH) and 49–50 (HS). An a divalent metal cation-binding site is contributed by H57. 4-CDP-2-C-methyl-D-erythritol 2-phosphate is bound by residues 71-73 (DIG), 76-80 (FSDTD), 115-121 (AQAPRMA), and R157.

Belongs to the IspF family. As to quaternary structure, homotrimer. A divalent metal cation serves as cofactor.

It catalyses the reaction 4-CDP-2-C-methyl-D-erythritol 2-phosphate = 2-C-methyl-D-erythritol 2,4-cyclic diphosphate + CMP. Its pathway is isoprenoid biosynthesis; isopentenyl diphosphate biosynthesis via DXP pathway; isopentenyl diphosphate from 1-deoxy-D-xylulose 5-phosphate: step 4/6. Its function is as follows. Involved in the biosynthesis of isopentenyl diphosphate (IPP) and dimethylallyl diphosphate (DMAPP), two major building blocks of isoprenoid compounds. Catalyzes the conversion of 4-diphosphocytidyl-2-C-methyl-D-erythritol 2-phosphate (CDP-ME2P) to 2-C-methyl-D-erythritol 2,4-cyclodiphosphate (ME-CPP) with a corresponding release of cytidine 5-monophosphate (CMP). The polypeptide is 2-C-methyl-D-erythritol 2,4-cyclodiphosphate synthase (Nitrosospira multiformis (strain ATCC 25196 / NCIMB 11849 / C 71)).